A 250-amino-acid polypeptide reads, in one-letter code: Probable transcriptional regulatory protein DP2908 (250 aa).

The protein belongs to the TACO1 family.

The protein resides in the cytoplasm. This Desulfotalea psychrophila (strain LSv54 / DSM 12343) protein is Probable transcriptional regulatory protein DP2908.